A 78-amino-acid chain; its full sequence is Sec-independent protein translocase protein TatA (78 aa).

A helical transmembrane segment spans residues 1-21 (MGGISIWQLLIVALIVVLLFG). The tract at residues 40 to 78 (KSAMSSEEEKKAIEDSASEKTAQTEEKKTESKDKDKEQV) is disordered. A compositionally biased stretch (basic and acidic residues) spans 46 to 78 (EEEKKAIEDSASEKTAQTEEKKTESKDKDKEQV).

It belongs to the TatA/E family. The Tat system comprises two distinct complexes: a TatABC complex, containing multiple copies of TatA, TatB and TatC subunits, and a separate TatA complex, containing only TatA subunits. Substrates initially bind to the TatABC complex, which probably triggers association of the separate TatA complex to form the active translocon.

It is found in the cell inner membrane. Part of the twin-arginine translocation (Tat) system that transports large folded proteins containing a characteristic twin-arginine motif in their signal peptide across membranes. TatA could form the protein-conducting channel of the Tat system. This Shewanella sediminis (strain HAW-EB3) protein is Sec-independent protein translocase protein TatA.